The following is a 130-amino-acid chain: Small ribosomal subunit protein uS8 (130 aa).

Belongs to the universal ribosomal protein uS8 family. Part of the 30S ribosomal subunit. Contacts proteins S5 and S12.

Functionally, one of the primary rRNA binding proteins, it binds directly to 16S rRNA central domain where it helps coordinate assembly of the platform of the 30S subunit. The protein is Small ribosomal subunit protein uS8 of Teredinibacter turnerae (strain ATCC 39867 / T7901).